A 317-amino-acid chain; its full sequence is Ribonuclease Z (317 aa).

Residues His-61, His-63, Asp-65, His-66, His-153, Asp-221, and His-280 each coordinate Zn(2+). The Proton acceptor role is filled by Asp-65.

This sequence belongs to the RNase Z family. In terms of assembly, homodimer. It depends on Zn(2+) as a cofactor.

The catalysed reaction is Endonucleolytic cleavage of RNA, removing extra 3' nucleotides from tRNA precursor, generating 3' termini of tRNAs. A 3'-hydroxy group is left at the tRNA terminus and a 5'-phosphoryl group is left at the trailer molecule.. In terms of biological role, zinc phosphodiesterase, which displays some tRNA 3'-processing endonuclease activity. Probably involved in tRNA maturation, by removing a 3'-trailer from precursor tRNA. This is Ribonuclease Z from Alkaliphilus oremlandii (strain OhILAs) (Clostridium oremlandii (strain OhILAs)).